Consider the following 275-residue polypeptide: Phosphate import ATP-binding protein PstB (275 aa).

Residues 29 to 270 enclose the ABC transporter domain; the sequence is LEIKDLDLYY…PNKKKTEDYI (242 aa). 61–68 is a binding site for ATP; the sequence is GPSGCGKS.

Belongs to the ABC transporter superfamily. Phosphate importer (TC 3.A.1.7) family. As to quaternary structure, the complex is composed of two ATP-binding proteins (PstB), two transmembrane proteins (PstC and PstA) and a solute-binding protein (PstS).

The protein resides in the cell inner membrane. It carries out the reaction phosphate(out) + ATP + H2O = ADP + 2 phosphate(in) + H(+). Its function is as follows. Part of the ABC transporter complex PstSACB involved in phosphate import. Responsible for energy coupling to the transport system. The chain is Phosphate import ATP-binding protein PstB from Pseudoalteromonas translucida (strain TAC 125).